Here is a 119-residue protein sequence, read N- to C-terminus: uncharacterized protein (119 aa).

Residues Ser78 to Leu119 are disordered. The span at Gln84–Leu93 shows a compositional bias: polar residues. Positions Gly109–Leu119 are enriched in basic residues.

This is an uncharacterized protein from Saccharomyces cerevisiae (strain ATCC 204508 / S288c) (Baker's yeast).